The chain runs to 334 residues: Formamidase (334 aa).

A CN hydrolase domain is found at 14-260 (FLVAAIQFPV…WEIVTGEIYP (247 aa)). The active-site Proton acceptor is the glutamate 60. Catalysis depends on lysine 133, which acts as the Proton donor. Catalysis depends on cysteine 166, which acts as the Nucleophile.

It belongs to the carbon-nitrogen hydrolase superfamily. Aliphatic amidase family.

It carries out the reaction formamide + H2O = formate + NH4(+). In terms of biological role, is an aliphatic amidase with a restricted substrate specificity, as it only hydrolyzes formamide. This Helicobacter pylori (strain P12) protein is Formamidase.